We begin with the raw amino-acid sequence, 155 residues long: Fibroblast growth factor 1 (155 aa).

Ala-2 carries the N-acetylalanine modification. The Nuclear localization signal motif lies at 24 to 27; it reads KKPK. Heparin is bound by residues 24-28 and 113-116; these read KKPKL and ISKK.

It belongs to the heparin-binding growth factors family. As to quaternary structure, monomer. Homodimer. Interacts with FGFR1, FGFR2, FGFR3 and FGFR4. Affinity between fibroblast growth factors (FGFs) and their receptors is increased by heparan sulfate glycosaminoglycans that function as coreceptors. Found in a complex with FGFBP1, FGF1 and FGF2. Interacts with FGFBP1. Part of a Cu(2+)-dependent multiprotein aggregate containing FGF1, S100A13 and SYT1. Interacts with S100A13. Interacts with FGFBP1. Interacts with LRRC59. Interacts with CSNKA, CSNKB and FIBP. While binding with LRRC59, CSNKA and FIBP seem mutually exclusive, CSNKB and FIBP may cooperatively interact with FGF1. Interacts with SYT1. Forms a ternary complex with FGFR1 and ITGAV:ITGB3 and induces the recruitment of PTPN11 to the complex. In terms of processing, in the nucleus, phosphorylated by PKC/PRKCD.

It localises to the secreted. It is found in the cytoplasm. Its subcellular location is the cell cortex. The protein resides in the cytosol. The protein localises to the nucleus. In terms of biological role, plays an important role in the regulation of cell survival, cell division, angiogenesis, cell differentiation and cell migration. Functions as a potent mitogen in vitro. Acts as a ligand for FGFR1 and integrins. Binds to FGFR1 in the presence of heparin leading to FGFR1 dimerization and activation via sequential autophosphorylation on tyrosine residues which act as docking sites for interacting proteins, leading to the activation of several signaling cascades. Binds to integrin ITGAV:ITGB3. Its binding to integrin, subsequent ternary complex formation with integrin and FGFR1, and the recruitment of PTPN11 to the complex are essential for FGF1 signaling. Induces the phosphorylation and activation of FGFR1, FRS2, MAPK3/ERK1, MAPK1/ERK2 and AKT1. Can induce angiogenesis. In Bos taurus (Bovine), this protein is Fibroblast growth factor 1 (FGF1).